A 270-amino-acid polypeptide reads, in one-letter code: Formamidopyrimidine-DNA glycosylase (270 aa).

Pro2 serves as the catalytic Schiff-base intermediate with DNA. Glu3 acts as the Proton donor in catalysis. The Proton donor; for beta-elimination activity role is filled by Lys56. 3 residues coordinate DNA: His89, Arg107, and Arg151. The segment at 236 to 270 adopts an FPG-type zinc-finger fold; that stretch reads TVYGRAGEPCRVCATPIRLLRQGQRSTYYCPNCQK. Arg260 serves as the catalytic Proton donor; for delta-elimination activity.

Belongs to the FPG family. In terms of assembly, monomer. Zn(2+) serves as cofactor.

The catalysed reaction is Hydrolysis of DNA containing ring-opened 7-methylguanine residues, releasing 2,6-diamino-4-hydroxy-5-(N-methyl)formamidopyrimidine.. The enzyme catalyses 2'-deoxyribonucleotide-(2'-deoxyribose 5'-phosphate)-2'-deoxyribonucleotide-DNA = a 3'-end 2'-deoxyribonucleotide-(2,3-dehydro-2,3-deoxyribose 5'-phosphate)-DNA + a 5'-end 5'-phospho-2'-deoxyribonucleoside-DNA + H(+). Functionally, involved in base excision repair of DNA damaged by oxidation or by mutagenic agents. Acts as a DNA glycosylase that recognizes and removes damaged bases. Has a preference for oxidized purines, such as 7,8-dihydro-8-oxoguanine (8-oxoG). Has AP (apurinic/apyrimidinic) lyase activity and introduces nicks in the DNA strand. Cleaves the DNA backbone by beta-delta elimination to generate a single-strand break at the site of the removed base with both 3'- and 5'-phosphates. This is Formamidopyrimidine-DNA glycosylase from Variovorax paradoxus (strain S110).